We begin with the raw amino-acid sequence, 442 residues long: Exodeoxyribonuclease 7 large subunit (442 aa).

Belongs to the XseA family. Heterooligomer composed of large and small subunits.

It is found in the cytoplasm. The enzyme catalyses Exonucleolytic cleavage in either 5'- to 3'- or 3'- to 5'-direction to yield nucleoside 5'-phosphates.. Functionally, bidirectionally degrades single-stranded DNA into large acid-insoluble oligonucleotides, which are then degraded further into small acid-soluble oligonucleotides. The polypeptide is Exodeoxyribonuclease 7 large subunit (Rickettsia bellii (strain OSU 85-389)).